A 596-amino-acid chain; its full sequence is Elongation factor 4 (596 aa).

A tr-type G domain is found at 2–184 (KHIRNFSIIA…TIVAQIPPPE (183 aa)). GTP-binding positions include 14–19 (DHGKST) and 131–134 (NKID).

The protein belongs to the TRAFAC class translation factor GTPase superfamily. Classic translation factor GTPase family. LepA subfamily.

It localises to the cell inner membrane. It carries out the reaction GTP + H2O = GDP + phosphate + H(+). Its function is as follows. Required for accurate and efficient protein synthesis under certain stress conditions. May act as a fidelity factor of the translation reaction, by catalyzing a one-codon backward translocation of tRNAs on improperly translocated ribosomes. Back-translocation proceeds from a post-translocation (POST) complex to a pre-translocation (PRE) complex, thus giving elongation factor G a second chance to translocate the tRNAs correctly. Binds to ribosomes in a GTP-dependent manner. This is Elongation factor 4 from Shewanella loihica (strain ATCC BAA-1088 / PV-4).